Here is a 380-residue protein sequence, read N- to C-terminus: M-protease (380 aa).

The first 27 residues, 1-27 (MKKPLGKIVASTALLISVAFSSSIASA), serve as a signal peptide directing secretion. A propeptide spanning residues 28-111 (AEEAKEKYLI…IEEDAEVTTM (84 aa)) is cleaved from the precursor. One can recognise an Inhibitor I9 domain in the interval 34 to 111 (KYLIGFNEQE…IEEDAEVTTM (78 aa)). Gln113 contributes to the Ca(2+) binding site. The region spanning 116–379 (PWGISRVQAP…SGLVNAEAAT (264 aa)) is the Peptidase S8 domain. Catalysis depends on Asp143, which acts as the Charge relay system. Asp151 contributes to the Ca(2+) binding site. The active-site Charge relay system is His173. Positions 184, 186, 188, 190, 274, 276, 279, and 302 each coordinate Ca(2+). Residue Ser326 is the Charge relay system of the active site.

This sequence belongs to the peptidase S8 family. As to quaternary structure, monomer. It depends on Ca(2+) as a cofactor.

It localises to the secreted. With respect to regulation, activity is inhibited by phenylmethylsulfonyl fluoride and chymostatin. In terms of biological role, alkaline serine protease that cleaves various substrates, including N-succinyl-Ala-Ala-Pro-Phe-pNA, N-succinyl-Ala-Ala-Pro-MetpNA, oxidized insulin B chain, casein, hemoglobin and scleroproteins, such as keratin, alpha-keratin and elastin. The protein is M-protease (aprE) of Shouchella clausii (strain KSM-K16) (Alkalihalobacillus clausii).